Consider the following 481-residue polypeptide: G-protein coupled receptor 37-like 1 (481 aa).

A signal peptide spans 1 to 25; the sequence is MRWLWPLAVSLAVILAVGLSRVSGG. 2 disordered regions span residues 26–58 and 70–108; these read APLHLGRHRAETQEQQSRSKRGTEDEEAKGVQQ and PIHPAGLQPTKPLVATSPNPGKDGGTPDSGQELRGNLTG. At 26–134 the chain is on the extracellular side; the sequence is APLHLGRHRA…ESSYSAYAIM (109 aa). O-linked (GalNAc...) threonine glycans are attached at residues Thr-79 and Thr-85. An O-linked (GalNAc...) serine glycan is attached at Ser-86. Thr-95 carries an O-linked (GalNAc...) threonine glycan. Asn-105 carries N-linked (GlcNAc...) asparagine glycosylation. O-linked (GalNAc...) threonine glycosylation is present at Thr-107. The chain crosses the membrane as a helical span at residues 135–155; sequence LLALVVFAVGIVGNLSVMCIV. At 156 to 167 the chain is on the cytoplasmic side; it reads WHSYYLKSAWNS. The chain crosses the membrane as a helical span at residues 168–188; it reads ILASLALWDFLVLFFCLPIVI. Topologically, residues 189–205 are extracellular; that stretch reads FNEITKQRLLGDVSCRA. Residues Cys-203 and Cys-286 are joined by a disulfide bond. The helical transmembrane segment at 206 to 226 threads the bilayer; sequence VPFMEVSSLGVTTFSLCALGI. The Cytoplasmic segment spans residues 227 to 251; the sequence is DRFHVATSTLPKVRPIERCQSILAK. A helical membrane pass occupies residues 252–272; it reads LAVIWVGSMTLAVPELLLWQL. Residues 273–310 are Extracellular-facing; sequence AQEPAPTMGTLDSCIMKPSASLPESLYSLVMTYQNARM. The helical transmembrane segment at 311-331 threads the bilayer; that stretch reads WWYFGCYFCLPILFTVTCQLV. Over 332–361 the chain is Cytoplasmic; it reads TWRVRGPPGRKSECRASKHEQCESQLNSTV. A helical transmembrane segment spans residues 362-382; it reads VGLTVVYAFCTLPENVCNIVV. Over 383–398 the chain is Extracellular; sequence AYLSTELTRQTLDLLG. Residues 399-419 form a helical membrane-spanning segment; sequence LINQFSTFFKGAITPVLLLCI. Residues 420–481 are Cytoplasmic-facing; the sequence is CRPLGQAFLD…PPLLPLGTPC (62 aa). Ser-471 is modified (phosphoserine). Position 479 is a phosphothreonine (Thr-479).

It belongs to the G-protein coupled receptor 1 family. Interacts with the PTCH1 receptor. Post-translationally, O-glycosylated. Undergoes metalloprotease-mediated cleavage which reduces its constitutive activity. In terms of processing, ubiquitinated. In terms of tissue distribution, expressed in primary cortical astrocytes (at protein level). Expressed in the central nervous system.

The protein resides in the cell membrane. It localises to the cell projection. The protein localises to the cilium membrane. G-protein coupled receptor. Has been shown to bind the neuroprotective and glioprotective factor prosaposin (PSAP), leading to endocytosis followed by an ERK phosphorylation cascade. However, other studies have shown that prosaposin does not increase activity. It has been suggested that GPR37L1 is a constitutively active receptor which signals through the guanine nucleotide-binding protein G(s) subunit alpha. Participates in the regulation of postnatal cerebellar development by modulating the Shh pathway. Regulates baseline blood pressure in females and protects against cardiovascular stress in males. Mediates inhibition of astrocyte glutamate transporters and reduction in neuronal N-methyl-D-aspartate receptor activity. The protein is G-protein coupled receptor 37-like 1 (GPR37L1) of Homo sapiens (Human).